Reading from the N-terminus, the 529-residue chain is Peptide chain release factor 3 (529 aa).

Residues 10–278 (ARRRTFAIIS…MFVEFAPGPQ (269 aa)) enclose the tr-type G domain. GTP is bound by residues 19-26 (SHPDAGKT), 87-91 (DTPGH), and 141-144 (NKMD).

Belongs to the TRAFAC class translation factor GTPase superfamily. Classic translation factor GTPase family. PrfC subfamily.

It is found in the cytoplasm. Its function is as follows. Increases the formation of ribosomal termination complexes and stimulates activities of RF-1 and RF-2. It binds guanine nucleotides and has strong preference for UGA stop codons. It may interact directly with the ribosome. The stimulation of RF-1 and RF-2 is significantly reduced by GTP and GDP, but not by GMP. The polypeptide is Peptide chain release factor 3 (Nitratidesulfovibrio vulgaris (strain DSM 19637 / Miyazaki F) (Desulfovibrio vulgaris)).